Here is an 89-residue protein sequence, read N- to C-terminus: HssA/B-like protein 14 (89 aa).

This sequence belongs to the hssA/B family.

This chain is HssA/B-like protein 14 (hssl14), found in Dictyostelium discoideum (Social amoeba).